The sequence spans 209 residues: Large ribosomal subunit protein uL3 (209 aa).

A disordered region spans residues 118-151 (GFQGAIKRHGQSRGPMSHGSRYHRRPGSMGPVAP).

The protein belongs to the universal ribosomal protein uL3 family. In terms of assembly, part of the 50S ribosomal subunit. Forms a cluster with proteins L14 and L19.

Functionally, one of the primary rRNA binding proteins, it binds directly near the 3'-end of the 23S rRNA, where it nucleates assembly of the 50S subunit. In Enterococcus faecalis (strain ATCC 700802 / V583), this protein is Large ribosomal subunit protein uL3.